The primary structure comprises 668 residues: Protein IQ-DOMAIN 14 (668 aa).

The tract at residues Met-1–Ile-11 is calmodulin-binding. Disordered regions lie at residues Thr-16–Ile-54 and Gly-66–Val-305. Positions His-18 to Ser-31 are enriched in basic and acidic residues. Positions Gly-32–Leu-43 are enriched in basic residues. Residues Pro-78 to Ala-96 show a composition bias toward pro residues. Low complexity-rich tracts occupy residues Ser-97–Ala-120 and Pro-166–Pro-175. Residues Pro-269–Ser-279 are compositionally biased toward pro residues. IQ domains lie at Gln-321–Leu-350 and Ala-343–Gln-372. Disordered regions lie at residues Ala-399–Ala-431 and Ser-476–Ser-561. Positions Val-415–Ala-431 are enriched in basic and acidic residues. Residues Asp-516 to Thr-529 show a composition bias toward polar residues.

It belongs to the IQD family. Binds to multiple calmodulin (CaM) in the presence of Ca(2+) and CaM-like proteins. In terms of tissue distribution, expressed in hypocotyls, cotyledons, leaves and petioles.

It localises to the cell membrane. The protein localises to the cytoplasm. The protein resides in the cytoskeleton. In terms of biological role, may be involved in cooperative interactions with calmodulins or calmodulin-like proteins. Recruits calmodulin proteins to microtubules, thus being a potential scaffold in cellular signaling and trafficking. Regulates cell and organ shapes (prevents twisting) in aerial parts probably by regulating transverse microtubules (MT) arrays alignment. Regulates the formation of oval xylem secondary cell-wall deposition pits through microtubule-dependent lateral inhibition of Rho GTPase domains, thus confining the area of active ROP domains within the lattice of the cortical microtubules. May associate with nucleic acids and regulate gene expression at the transcriptional or post-transcriptional level. This Arabidopsis thaliana (Mouse-ear cress) protein is Protein IQ-DOMAIN 14.